The following is a 386-amino-acid chain: Nucleosome assembly protein 1-like 4 (386 aa).

Residues 1-28 are disordered; sequence MAENSLSDGGPADSVEAAKNASNTEKLT. A2 carries the N-acetylalanine modification. Phosphoserine occurs at positions 5, 7, and 49. Phosphothreonine is present on T51. Phosphoserine occurs at positions 53 and 54. Residue T58 is modified to Phosphothreonine. K105 is subject to N6-acetyllysine. A Phosphoserine modification is found at S125. N6-acetyllysine is present on K146. Residues 265–271 carry the Nuclear localization signal motif; sequence IKKKQKH. At S304 the chain carries Phosphoserine. Acidic residues predominate over residues 339-370; sequence AIEDDDNFEEGEEGEEEELEGDEEGEDEDDAD. A disordered region spans residues 339–386; sequence AIEDDDNFEEGEEGEEEELEGDEEGEDEDDADVNPKKEPIQPAECKQQ.

Belongs to the nucleosome assembly protein (NAP) family. In terms of assembly, interacts with core (H2A, H2B, H3, H4) and linker (H1) histones. Post-translationally, polyglutamylated and polyglycylated. These 2 modifications occur exclusively on glutamate residues and result in either polyglutamate or polyglycine chains on the gamma-carboxyl group. Both modifications can coexist on the same protein on adjacent residues, and lowering polyglycylation levels increases polyglutamylation, and reciprocally. Polyglutamylated by TTLL4. In terms of processing, phosphorylated at the G0/G1 boundary but it is not phosphorylated in S-phase. Phosphorylated protein remains in the cytoplasm in a complex with histones during the G0/G1 transition, whereas dephosphorylation triggers its transport into the nucleus at the G1/S-boundary.

Its subcellular location is the nucleus. The protein localises to the cytoplasm. Its function is as follows. Acts as a histone chaperone in nucleosome assembly. The chain is Nucleosome assembly protein 1-like 4 (Nap1l4) from Rattus norvegicus (Rat).